Reading from the N-terminus, the 729-residue chain is Fatty acid oxidation complex subunit alpha (729 aa).

The interval 1-189 is enoyl-CoA hydratase/isomerase; it reads MLYKGDTLYL…KIGLVDGVVK (189 aa). A substrate-binding site is contributed by D296. The 3-hydroxyacyl-CoA dehydrogenase stretch occupies residues 311–729; that stretch reads ETPKQAAVLG…ARPVGDLKTA (419 aa). Residues M324, D343, 400-402, K407, and S429 contribute to the NAD(+) site; that span reads VVE. H450 serves as the catalytic For 3-hydroxyacyl-CoA dehydrogenase activity. N453 lines the NAD(+) pocket. Substrate-binding residues include N500 and Y660. The segment at 708–729 is disordered; that stretch reads RHNEPYYPPVEPARPVGDLKTA.

The protein in the N-terminal section; belongs to the enoyl-CoA hydratase/isomerase family. In the C-terminal section; belongs to the 3-hydroxyacyl-CoA dehydrogenase family. Heterotetramer of two alpha chains (FadB) and two beta chains (FadA).

The catalysed reaction is a (3S)-3-hydroxyacyl-CoA + NAD(+) = a 3-oxoacyl-CoA + NADH + H(+). It catalyses the reaction a (3S)-3-hydroxyacyl-CoA = a (2E)-enoyl-CoA + H2O. The enzyme catalyses a 4-saturated-(3S)-3-hydroxyacyl-CoA = a (3E)-enoyl-CoA + H2O. It carries out the reaction (3S)-3-hydroxybutanoyl-CoA = (3R)-3-hydroxybutanoyl-CoA. The catalysed reaction is a (3Z)-enoyl-CoA = a 4-saturated (2E)-enoyl-CoA. It catalyses the reaction a (3E)-enoyl-CoA = a 4-saturated (2E)-enoyl-CoA. It participates in lipid metabolism; fatty acid beta-oxidation. Involved in the aerobic and anaerobic degradation of long-chain fatty acids via beta-oxidation cycle. Catalyzes the formation of 3-oxoacyl-CoA from enoyl-CoA via L-3-hydroxyacyl-CoA. It can also use D-3-hydroxyacyl-CoA and cis-3-enoyl-CoA as substrate. In Escherichia coli O139:H28 (strain E24377A / ETEC), this protein is Fatty acid oxidation complex subunit alpha.